Reading from the N-terminus, the 530-residue chain is UDP-glucuronosyltransferase 1A7 (530 aa).

An N-terminal signal peptide occupies residues 1-25 (MARAGWTGLLPLYVCLLLTCGFAKA). N-linked (GlcNAc...) asparagine glycans are attached at residues Asn71, Asn292, and Asn344. Residues 488–504 (VIGFLLAVVLTVAFITF) traverse the membrane as a helical segment.

The protein belongs to the UDP-glycosyltransferase family. In terms of assembly, homodimer. Homooligomer. Interacts with UGT1A1, UGT1A3, UGT1A4, UGT1A6, UGT1A8, UGT1A9 and UGT1A10 to form heterodimers. Isoform 1 interacts with isoform 2/i2 suggesting that oligomerization is involved in negative regulation of transferase activity by isoform 2. Isoform 1 also interacts with respective i2 isoforms of UGT1A1, UGT1A3, UGT1A4, UGT1A6, UGT1A8, UGT1A9 and UGT1A10. In terms of tissue distribution, liver and gastric tissue. Isoform 1 and isoform 2 are expressed in esophagus. Neither isoform is expressed in liver, kidney, colon and small intestine.

The protein localises to the endoplasmic reticulum membrane. The catalysed reaction is glucuronate acceptor + UDP-alpha-D-glucuronate = acceptor beta-D-glucuronoside + UDP + H(+). It carries out the reaction 17alpha-estradiol + UDP-alpha-D-glucuronate = 17alpha-estradiol 3-O-(beta-D-glucuronate) + UDP + H(+). The enzyme catalyses prunetin + UDP-alpha-D-glucuronate = prunetin-5-O-beta-D-glucuronide + UDP. It catalyses the reaction 5-epi-5-F2t-IsoP + UDP-alpha-D-glucuronate = 5-epi-5-F2t-IsoP-glucuronide + UDP + H(+). The catalysed reaction is (E)-ferulate + UDP-alpha-D-glucuronate = (E)-ferulic acid beta-D-glucuronate ester + UDP. It carries out the reaction candesartan + UDP-alpha-D-glucuronate = candesartan O-beta-D-glucuronoside + UDP. The enzyme catalyses SN-38 + UDP-alpha-D-glucuronate = SN-38 O-beta-D-glucuronide + UDP + H(+). It catalyses the reaction mycophenolate + UDP-alpha-D-glucuronate = mycophenolate 7-O-beta-D-glucuronide + UDP + H(+). Its function is as follows. UDP-glucuronosyltransferase (UGT) that catalyzes phase II biotransformation reactions in which lipophilic substrates are conjugated with glucuronic acid to increase the metabolite's water solubility, thereby facilitating excretion into either the urine or bile. Essential for the elimination and detoxification of drugs, xenobiotics and endogenous compounds. Catalyzes the glucuronidation of endogenous estrogen hormone epiestradiol. Involved in the glucuronidation of F2-isoprostane (5-epi-5-F2t-IsoP). Involved in the glucuronidation of the phytochemical ferulic acid at the carboxylic acid group. Also catalyzes the glucuronidation of the isoflavones genistein, daidzein, glycitein, formononetin, biochanin A and prunetin, which are phytoestrogens with anticancer and cardiovascular properties. Involved in the glucuronidation of the AGTR1 angiotensin receptor antagonist caderastan, a drug which can inhibit the effect of angiotensin II. Involved in the biotransformation of 7-ethyl-10-hydroxycamptothecin (SN-38), the pharmacologically active metabolite of the anticancer drug irinotecan. Also metabolizes mycophenolate, an immunosuppressive agent. Lacks UGT glucuronidation activity but acts as a negative regulator of isoform 1. The chain is UDP-glucuronosyltransferase 1A7 from Homo sapiens (Human).